The chain runs to 190 residues: Ribose 1,5-bisphosphate phosphokinase PhnN (190 aa).

19–26 (GPSGVGKD) is an ATP binding site.

The protein belongs to the ribose 1,5-bisphosphokinase family.

The catalysed reaction is alpha-D-ribose 1,5-bisphosphate + ATP = 5-phospho-alpha-D-ribose 1-diphosphate + ADP. It participates in metabolic intermediate biosynthesis; 5-phospho-alpha-D-ribose 1-diphosphate biosynthesis; 5-phospho-alpha-D-ribose 1-diphosphate from D-ribose 5-phosphate (route II): step 3/3. Catalyzes the phosphorylation of ribose 1,5-bisphosphate to 5-phospho-D-ribosyl alpha-1-diphosphate (PRPP). This chain is Ribose 1,5-bisphosphate phosphokinase PhnN, found in Ruegeria sp. (strain TM1040) (Silicibacter sp.).